Here is a 76-residue protein sequence, read N- to C-terminus: DNA-directed RNA polymerase subunit epsilon (76 aa).

The protein belongs to the RNA polymerase subunit epsilon family. RNAP is composed of a core of 2 alpha, a beta and a beta' subunit. The core is associated with a delta subunit, and at least one of epsilon or omega. When a sigma factor is associated with the core the holoenzyme is formed, which can initiate transcription.

It catalyses the reaction RNA(n) + a ribonucleoside 5'-triphosphate = RNA(n+1) + diphosphate. Functionally, a non-essential component of RNA polymerase (RNAP). The sequence is that of DNA-directed RNA polymerase subunit epsilon from Lactococcus lactis subsp. cremoris (strain MG1363).